The primary structure comprises 224 residues: Glutamate/aspartate import permease protein GltK (224 aa).

The Periplasmic portion of the chain corresponds to 1–19; that stretch reads MYEFDWSSIVPSLPYLLDG. A helical membrane pass occupies residues 20–40; sequence LVITLKITVTAVVIGILWGTM. Residues 20 to 216 form the ABC transmembrane type-1 domain; that stretch reads LVITLKITVT…VISLSASLLV (197 aa). Residues 41 to 67 are Cytoplasmic-facing; the sequence is LAVMRLSSFAPVAWFAKAYVNVFRSIP. The helical transmembrane segment at 68–88 threads the bilayer; the sequence is LVMVLLWFYLIVPGFLQNVLG. Residues 89–94 lie on the Periplasmic side of the membrane; it reads LSPKND. The chain crosses the membrane as a helical span at residues 95 to 112; sequence IRLISAMVAFSMFEAAYY. Residues 113 to 154 are Cytoplasmic-facing; that stretch reads SEIIRAGIQSISRGQSSAALALGMTHWQSMKLIILPQAFRAM. The chain crosses the membrane as a helical span at residues 155 to 175; sequence VPLLLTQGIVLFQDTSLVYVL. At 176-196 the chain is on the periplasmic side; it reads SLADFFRTASTIGERDGTQVE. A helical transmembrane segment spans residues 197–217; that stretch reads MILFAGFVYFVISLSASLLVS. Residues 218 to 224 lie on the Cytoplasmic side of the membrane; that stretch reads YLKRRTA.

Belongs to the binding-protein-dependent transport system permease family. HisMQ subfamily. As to quaternary structure, the complex is composed of two ATP-binding proteins (GltL), two transmembrane proteins (GltJ and GltK) and a solute-binding protein (GltI).

Its subcellular location is the cell inner membrane. Functionally, part of the ABC transporter complex GltIJKL involved in glutamate and aspartate uptake. Probably responsible for the translocation of the substrate across the membrane. In Escherichia coli O157:H7, this protein is Glutamate/aspartate import permease protein GltK (gltK).